An 82-amino-acid polypeptide reads, in one-letter code: RNA-binding protein Hfq (82 aa).

Positions 11 to 71 constitute a Sm domain; the sequence is DTFLNHVRKT…ISTIMPGAPI (61 aa).

This sequence belongs to the Hfq family. Homohexamer.

RNA chaperone that binds small regulatory RNA (sRNAs) and mRNAs to facilitate mRNA translational regulation in response to envelope stress, environmental stress and changes in metabolite concentrations. Also binds with high specificity to tRNAs. The protein is RNA-binding protein Hfq of Rhodopseudomonas palustris (strain TIE-1).